Here is a 218-residue protein sequence, read N- to C-terminus: uncharacterized protein (218 aa).

This is an uncharacterized protein from Acanthamoeba polyphaga (Amoeba).